The primary structure comprises 190 residues: Adenylate kinase (190 aa).

12 to 17 (GSGKTT) serves as a coordination point for ATP. Positions 34 to 63 (STGELLRAEVASGSERGKIIEGFTSKGNLV) are NMP. AMP-binding positions include threonine 35, arginine 40, 61-63 (NLV), 88-91 (GYPR), and glutamine 95. The LID stretch occupies residues 130-136 (GRARGAD). ATP is bound at residue arginine 131. Positions 133 and 145 each coordinate AMP. Arginine 173 is a binding site for ATP.

Belongs to the adenylate kinase family. Monomer.

The protein resides in the cytoplasm. The catalysed reaction is AMP + ATP = 2 ADP. Its pathway is purine metabolism; AMP biosynthesis via salvage pathway; AMP from ADP: step 1/1. Catalyzes the reversible transfer of the terminal phosphate group between ATP and AMP. Plays an important role in cellular energy homeostasis and in adenine nucleotide metabolism. The chain is Adenylate kinase from Wolinella succinogenes (strain ATCC 29543 / DSM 1740 / CCUG 13145 / JCM 31913 / LMG 7466 / NCTC 11488 / FDC 602W) (Vibrio succinogenes).